Consider the following 204-residue polypeptide: MGSVQLSGSGLVASLPPNHSFSHKTKLNKPNSYFFRSKHNAARTKTVRAISTAPASQPPAADEPDEPPAVDFAFVHSVLLPDGTPDVHWRRANGGQKLRDIMLDSNIELYGPYSKPLSNCAGVGTCATCMVEIVNGKELLNPRTDIEKEKLKRKPKNWRLACQTNVGNPDSTGLVVIQQLPEWKAHEWNIPKNIPNDDDLETST.

Disordered regions lie at residues 1–24 (MGSVQLSGSGLVASLPPNHSFSHK) and 45–68 (KTVRAISTAPASQPPAADEPDEPP). Residues 1–48 (MGSVQLSGSGLVASLPPNHSFSHKTKLNKPNSYFFRSKHNAARTKTVR) constitute a chloroplast transit peptide. The region spanning 76-180 (HSVLLPDGTP…STGLVVIQQL (105 aa)) is the 2Fe-2S ferredoxin-type domain. [2Fe-2S] cluster contacts are provided by Cys120, Cys126, Cys129, and Cys162.

Part of the chloroplast NDH complex, composed of a mixture of chloroplast and nucleus encoded subunits. Component of the NDH subcomplex B, at least composed of PnsB1, PnsB2, PnsB3, PnsB4 and PnsB5.

Its subcellular location is the plastid. The protein resides in the chloroplast thylakoid membrane. Its function is as follows. NDH shuttles electrons from NAD(P)H:plastoquinone, via FMN and iron-sulfur (Fe-S) centers, to quinones in the photosynthetic chain and possibly in a chloroplast respiratory chain. The immediate electron acceptor for the enzyme in this species is believed to be plastoquinone. Couples the redox reaction to proton translocation, and thus conserves the redox energy in a proton gradient. This Arabidopsis thaliana (Mouse-ear cress) protein is Photosynthetic NDH subunit of subcomplex B 3, chloroplastic.